The sequence spans 159 residues: MAVQLVLNFIIAVFWLFVTNSYTTNNFVLGFIFGLVLVYLLHRVLPGRFYVITLYRIIKLVIIFLIELIKANFDVLKIIIKPSIKNEPGFFVYHTDLKKDWQIVLLSNLITLTPGTVVLGVSDDRTKIYIHAIDFSTKEQEVESIKTSLEKIVREVGEI.

The next 4 helical transmembrane spans lie at 1 to 21 (MAVQ…VTNS), 27 to 47 (FVLG…VLPG), 49 to 69 (FYVI…IELI), and 101 to 121 (WQIV…VLGV).

It belongs to the CPA3 antiporters (TC 2.A.63) subunit E family. May form a heterooligomeric complex that consists of seven subunits: mnhA1, mnhB1, mnhC1, mnhD1, mnhE1, mnhF1 and mnhG1.

It localises to the cell membrane. Its function is as follows. Mnh complex is a Na(+)/H(+) antiporter involved in Na(+) excretion. This chain is Na(+)/H(+) antiporter subunit E1 (mnhE1), found in Staphylococcus aureus (strain Mu3 / ATCC 700698).